Here is a 73-residue protein sequence, read N- to C-terminus: Antitoxin VapB2 (73 aa).

As to quaternary structure, forms a homodimer, which binds to a toxin homodimer, which then oligomerizes further to a hetero-octamer. When bound to toxin VapC2 the toxin activity is inhibited; 1 antitoxin may suffice to inhibit toxin.

Functionally, antitoxin component of a type II toxin-antitoxin (TA) system. Upon expression in M.smegmatis neutralizes the effect of cognate toxin VapC2. The C-terminal helix of the antitoxin may obstruct the toxin's RNA-binding groove, blocking access to the active sites. Additionally, the C-terminal arginine of the antitoxin may remove Mg(2+) ions from the toxin active sites. This is Antitoxin VapB2 (vapB2) from Mycobacterium tuberculosis (strain ATCC 25618 / H37Rv).